The chain runs to 289 residues: Acetyl-coenzyme A carboxylase carboxyl transferase subunit beta (289 aa).

In terms of domain architecture, CoA carboxyltransferase N-terminal spans 28 to 289; sequence VMTKCPKCKK…QGEGMAVWQN (262 aa). C32, C35, C51, and C54 together coordinate Zn(2+). The C4-type zinc finger occupies 32–54; sequence CPKCKKIMYTKELLKNLKVCVNC.

The protein belongs to the AccD/PCCB family. Acetyl-CoA carboxylase is a heterohexamer composed of biotin carboxyl carrier protein (AccB), biotin carboxylase (AccC) and two subunits each of ACCase subunit alpha (AccA) and ACCase subunit beta (AccD). Zn(2+) is required as a cofactor.

The protein resides in the cytoplasm. It catalyses the reaction N(6)-carboxybiotinyl-L-lysyl-[protein] + acetyl-CoA = N(6)-biotinyl-L-lysyl-[protein] + malonyl-CoA. It functions in the pathway lipid metabolism; malonyl-CoA biosynthesis; malonyl-CoA from acetyl-CoA: step 1/1. Functionally, component of the acetyl coenzyme A carboxylase (ACC) complex. Biotin carboxylase (BC) catalyzes the carboxylation of biotin on its carrier protein (BCCP) and then the CO(2) group is transferred by the transcarboxylase to acetyl-CoA to form malonyl-CoA. This Bacillus cytotoxicus (strain DSM 22905 / CIP 110041 / 391-98 / NVH 391-98) protein is Acetyl-coenzyme A carboxylase carboxyl transferase subunit beta.